Reading from the N-terminus, the 257-residue chain is Phosphate import ATP-binding protein PstB (257 aa).

Positions leucine 5–glutamate 246 constitute an ABC transporter domain. Residue glycine 37–serine 44 coordinates ATP.

Belongs to the ABC transporter superfamily. Phosphate importer (TC 3.A.1.7) family. In terms of assembly, the complex is composed of two ATP-binding proteins (PstB), two transmembrane proteins (PstC and PstA) and a solute-binding protein (PstS).

Its subcellular location is the cell membrane. The catalysed reaction is phosphate(out) + ATP + H2O = ADP + 2 phosphate(in) + H(+). Part of the ABC transporter complex PstSACB involved in phosphate import. Responsible for energy coupling to the transport system. The sequence is that of Phosphate import ATP-binding protein PstB from Tropheryma whipplei (strain TW08/27) (Whipple's bacillus).